A 310-amino-acid chain; its full sequence is Small ribosomal subunit biogenesis GTPase RsgA (310 aa).

The CP-type G domain maps to 77 to 236 (KNELKRPNIA…IADTPGFSKL (160 aa)). Residues 126–129 (SKID) and 179–187 (GQTGVGKST) each bind GTP. Positions 260, 266, 268, and 274 each coordinate Zn(2+).

Belongs to the TRAFAC class YlqF/YawG GTPase family. RsgA subfamily. Monomer. Associates with 30S ribosomal subunit, binds 16S rRNA. Zn(2+) serves as cofactor.

The protein localises to the cytoplasm. Functionally, one of several proteins that assist in the late maturation steps of the functional core of the 30S ribosomal subunit. Helps release RbfA from mature subunits. May play a role in the assembly of ribosomal proteins into the subunit. Circularly permuted GTPase that catalyzes slow GTP hydrolysis, GTPase activity is stimulated by the 30S ribosomal subunit. The polypeptide is Small ribosomal subunit biogenesis GTPase RsgA (Phytoplasma australiense).